The following is a 303-amino-acid chain: Coenzyme PQQ synthesis protein B (303 aa).

The protein belongs to the PqqB family.

Its pathway is cofactor biosynthesis; pyrroloquinoline quinone biosynthesis. In terms of biological role, may be involved in the transport of PQQ or its precursor to the periplasm. The sequence is that of Coenzyme PQQ synthesis protein B from Acinetobacter baumannii (strain AB0057).